Reading from the N-terminus, the 306-residue chain is MRGMVSFAVWALFAALLSQQLFASVASVRFEDAKTYYLSPPSGSHGTPPSHTPPSSNCGSPPYDPSPSTPSHPSPPSHTPTPSTPSHTPTPHTPSHTPTPHTPPCNCGSPPSHPSTPSHPSTPSHPTPSHPPSGGYYSSPPPRTPVVVTPPSPIVDPGTPIIGGSPPTPIIDPGTPGTPFIPAPFPPITGTCDYWRNHPTLIWGLLGWWGTVGGAFGTVSIPSSIPGFDPHMNLLQALSNTRSDPIGALYREGTASWLNSMVNHKFPFTTPQVRDHFVAGLSSNKAATKQAHTFKLANEGRLKPRV.

An N-terminal signal peptide occupies residues 1–23 (MRGMVSFAVWALFAALLSQQLFA). Over residues 40–56 (PPSGSHGTPPSHTPPSS) the composition is skewed to low complexity. The segment at 40–156 (PPSGSHGTPP…VVTPPSPIVD (117 aa)) is disordered. The span at 62–83 (PYDPSPSTPSHPSPPSHTPTPS) shows a compositional bias: pro residues. Residues 84–99 (TPSHTPTPHTPSHTPT) show a composition bias toward low complexity. The span at 139 to 154 (SPPPRTPVVVTPPSPI) shows a compositional bias: pro residues.

In terms of tissue distribution, confined to the shoot apical meristem (SAM) at the layer L1 in vegetative, infloresence and floral meristems, as well as in protoderm of organ primordia, including during embryogenesis. Also present in the tip of emerging lateral root primordia.

In terms of biological role, may be involved in the regulation of meristem growth. This chain is Protodermal factor 1 (PDF1), found in Arabidopsis thaliana (Mouse-ear cress).